Reading from the N-terminus, the 445-residue chain is E3 ubiquitin-protein ligase MYLIP (445 aa).

The 279-residue stretch at M1–T279 folds into the FERM domain. Residues C360, C363, and C368 each coordinate Fe cation. The segment at C387–R422 adopts an RING-type zinc-finger fold. The interval V431–L433 is critical for homodimerization.

As to quaternary structure, homodimer. Interacts with the E2 ubiquitin-conjugating enzyme, UBE2D1 (via RING-type zinc finger). Interacts with myosin regulatory light chain (MRLC) and TMEM4. Post-translationally, autoubiquitinated. In terms of tissue distribution, ubiquitously expressed.

It localises to the cytoplasm. The protein resides in the cell membrane. It carries out the reaction S-ubiquitinyl-[E2 ubiquitin-conjugating enzyme]-L-cysteine + [acceptor protein]-L-lysine = [E2 ubiquitin-conjugating enzyme]-L-cysteine + N(6)-ubiquitinyl-[acceptor protein]-L-lysine.. It functions in the pathway protein modification; protein ubiquitination. Can bind 1 iron ion per dimer. Iron binding seems to decrease LDLR degradation activity. E3 ubiquitin-protein ligase that mediates ubiquitination and subsequent proteasomal degradation of myosin regulatory light chain (MRLC), LDLR, VLDLR and LRP8. Activity depends on E2 enzymes of the UBE2D family. Proteasomal degradation of MRLC leads to inhibit neurite outgrowth in presence of NGF by counteracting the stabilization of MRLC by saposin-like protein (CNPY2/MSAP) and reducing CNPY2-stimulated neurite outgrowth. Acts as a sterol-dependent inhibitor of cellular cholesterol uptake by mediating ubiquitination and subsequent degradation of LDLR. The chain is E3 ubiquitin-protein ligase MYLIP (MYLIP) from Homo sapiens (Human).